Reading from the N-terminus, the 680-residue chain is Protein terminal ear1 homolog (680 aa).

The RRM domain occupies 223-295 (SLVVLNSLPA…RRLVVEYTRP (73 aa)). Disordered stretches follow at residues 294–415 (RPSL…SWRG) and 593–680 (TEPV…GYTD). Composition is skewed to low complexity over residues 328-340 (PSQS…SGSG) and 379-403 (SAAA…KQSQ). Positions 404-413 (KGGGGRGGSW) are enriched in gly residues. Low complexity-rich tracts occupy residues 602-621 (SPAP…CAAS) and 634-648 (SSSG…SSNA). Over residues 656–666 (HGETGGDRGDD) the composition is skewed to basic and acidic residues.

Highly expressed in shoot apex and inflorescence apex, at intermediate levels in roots and at low levels in leaf blade and leaf sheath.

Probable RNA-binding protein. Involved in the regular timing (plastochron) of lateral organs formation. May regulate the rate of leaf initiation and the duration of vegetative phase. Seems to be redundant to the function of PLASTOCHRON1, but to act in an independent pathway. The polypeptide is Protein terminal ear1 homolog (PLA2) (Oryza sativa subsp. indica (Rice)).